Here is a 272-residue protein sequence, read N- to C-terminus: HMP-PP phosphatase (272 aa).

D8 (nucleophile) is an active-site residue. Residues D8, D10, and D212 each coordinate Mg(2+).

This sequence belongs to the HAD-like hydrolase superfamily. Cof family. Requires Mg(2+) as cofactor.

It carries out the reaction 4-amino-2-methyl-5-(diphosphooxymethyl)pyrimidine + H2O = 4-amino-2-methyl-5-(phosphooxymethyl)pyrimidine + phosphate + H(+). Its function is as follows. Catalyzes the hydrolysis of 4-amino-2-methyl-5-hydroxymethylpyrimidine pyrophosphate (HMP-PP) to 4-amino-2-methyl-5-hydroxymethylpyrimidine phosphate (HMP-P). In Escherichia coli (strain K12 / MC4100 / BW2952), this protein is HMP-PP phosphatase.